A 335-amino-acid chain; its full sequence is MIEADRIISGQAKVDEDVIDRAIRPKLLADYVGQPQVREQMDIFIKAAKLRQDALDHLLIFGPPGLGKTTLANIVANEMGVNIRTTSGPVLEKAGDLAAMLTNLEPHDVLFIDEIHRLSPAIEEVLYPAMEDYQLDIMIGEGPAARSIKLDLPPFTLVGATTRAGSLTSPLRDRFGIVQRLEFYSVEDLTSIVARSADCLNLELEQQAAFEVARRSRGTPRIANRLLRRVRDYADVRNGGIISINVAKQALSMLDVDDAGFDYLDRKLLSAVIERFDGGPVGLDNLAAAIGEERDTIEDVLEPYLIQQGFLQRTPRGRIATSQTYRHFGLQKLSD.

The tract at residues 4 to 184 is large ATPase domain (RuvB-L); the sequence is ADRIISGQAK…FGIVQRLEFY (181 aa). Residues isoleucine 23, arginine 24, glycine 65, lysine 68, threonine 69, threonine 70, 131–133, arginine 174, tyrosine 184, and arginine 221 each bind ATP; that span reads EDY. Position 69 (threonine 69) interacts with Mg(2+). Positions 185–255 are small ATPAse domain (RuvB-S); that stretch reads SVEDLTSIVA…VAKQALSMLD (71 aa). Positions 258–335 are head domain (RuvB-H); that stretch reads DAGFDYLDRK…RHFGLQKLSD (78 aa). 3 residues coordinate DNA: arginine 294, arginine 313, and arginine 318.

It belongs to the RuvB family. In terms of assembly, homohexamer. Forms an RuvA(8)-RuvB(12)-Holliday junction (HJ) complex. HJ DNA is sandwiched between 2 RuvA tetramers; dsDNA enters through RuvA and exits via RuvB. An RuvB hexamer assembles on each DNA strand where it exits the tetramer. Each RuvB hexamer is contacted by two RuvA subunits (via domain III) on 2 adjacent RuvB subunits; this complex drives branch migration. In the full resolvosome a probable DNA-RuvA(4)-RuvB(12)-RuvC(2) complex forms which resolves the HJ.

The protein localises to the cytoplasm. The enzyme catalyses ATP + H2O = ADP + phosphate + H(+). In terms of biological role, the RuvA-RuvB-RuvC complex processes Holliday junction (HJ) DNA during genetic recombination and DNA repair, while the RuvA-RuvB complex plays an important role in the rescue of blocked DNA replication forks via replication fork reversal (RFR). RuvA specifically binds to HJ cruciform DNA, conferring on it an open structure. The RuvB hexamer acts as an ATP-dependent pump, pulling dsDNA into and through the RuvAB complex. RuvB forms 2 homohexamers on either side of HJ DNA bound by 1 or 2 RuvA tetramers; 4 subunits per hexamer contact DNA at a time. Coordinated motions by a converter formed by DNA-disengaged RuvB subunits stimulates ATP hydrolysis and nucleotide exchange. Immobilization of the converter enables RuvB to convert the ATP-contained energy into a lever motion, pulling 2 nucleotides of DNA out of the RuvA tetramer per ATP hydrolyzed, thus driving DNA branch migration. The RuvB motors rotate together with the DNA substrate, which together with the progressing nucleotide cycle form the mechanistic basis for DNA recombination by continuous HJ branch migration. Branch migration allows RuvC to scan DNA until it finds its consensus sequence, where it cleaves and resolves cruciform DNA. This chain is Holliday junction branch migration complex subunit RuvB, found in Haemophilus influenzae (strain 86-028NP).